We begin with the raw amino-acid sequence, 90 residues long: Small ribosomal subunit protein uS17 (90 aa).

It belongs to the universal ribosomal protein uS17 family. As to quaternary structure, part of the 30S ribosomal subunit.

In terms of biological role, one of the primary rRNA binding proteins, it binds specifically to the 5'-end of 16S ribosomal RNA. This is Small ribosomal subunit protein uS17 from Burkholderia ambifaria (strain ATCC BAA-244 / DSM 16087 / CCUG 44356 / LMG 19182 / AMMD) (Burkholderia cepacia (strain AMMD)).